An 87-amino-acid polypeptide reads, in one-letter code: Large ribosomal subunit protein bL27 (87 aa).

Residues 1 to 23 form a disordered region; sequence MAHKKGTGSTRNGRDSNAQRLGV. The span at 7-19 shows a compositional bias: polar residues; the sequence is TGSTRNGRDSNAQ.

The protein belongs to the bacterial ribosomal protein bL27 family.

This is Large ribosomal subunit protein bL27 (rpmA) from Synechocystis sp. (strain ATCC 27184 / PCC 6803 / Kazusa).